The sequence spans 574 residues: Ankyrin repeat protein B18 (574 aa).

6 ANK repeats span residues 56–87 (TGYTALHCYLYNNYFTNDVLKVLLNHGVDVTI), 135–164 (IKSRYMLLKEEDIDENIVSTLLDKGIDPNF), 167–213 (DGYT…NLNA), 217–249 (CGNTPFHLYLSIEMCNNIHMTKMLLTFNPNFEI), 253–285 (HGLTPILCYITSDYIQHDILVMLIHHYETNVGE), and 327–356 (EGKTLLHIACEYNNTHVIDYLIRINGDINA). An F-box domain is found at 541 to 574 (KCLLTLLPSEIIYEILYMLTIYDLYNISYPPTKV).

The chain is Ankyrin repeat protein B18 from Variola virus (isolate Human/India/Ind3/1967) (VARV).